Reading from the N-terminus, the 20-residue chain is Kassinatuerin-2 (20 aa).

Residue Ile20 is modified to Isoleucine amide.

As to expression, expressed by the skin dorsal glands.

It is found in the secreted. Functionally, has no antimicrobial activities against bacteria (E.coli and S.aureus) nor against the fungus C.albicans. This chain is Kassinatuerin-2, found in Kassina senegalensis (Senegal running frog).